Reading from the N-terminus, the 555-residue chain is Oxygen-dependent choline dehydrogenase (555 aa).

An FAD-binding site is contributed by 4–33; it reads DYIIIGAGSAGNVLATRLTEDPDVTVLLLE. The Proton acceptor role is filled by His473.

Belongs to the GMC oxidoreductase family. FAD serves as cofactor.

It carries out the reaction choline + A = betaine aldehyde + AH2. It catalyses the reaction betaine aldehyde + NAD(+) + H2O = glycine betaine + NADH + 2 H(+). Its pathway is amine and polyamine biosynthesis; betaine biosynthesis via choline pathway; betaine aldehyde from choline (cytochrome c reductase route): step 1/1. Involved in the biosynthesis of the osmoprotectant glycine betaine. Catalyzes the oxidation of choline to betaine aldehyde and betaine aldehyde to glycine betaine at the same rate. This chain is Oxygen-dependent choline dehydrogenase, found in Proteus mirabilis (strain HI4320).